The chain runs to 118 residues: UPF0382 membrane protein C1782.12c (118 aa).

The signal sequence occupies residues 1-18 (MTIWNVAALTGLLSVGLG). Residues 19–40 (AYGSHGLQKRVQDPHLLKSWST) are Lumenal-facing. The helical transmembrane segment at 41 to 61 (ACTYLMFHSLATMAVSLHPVY) threads the bilayer. Over 62–67 (GKSRWT) the chain is Cytoplasmic. A helical membrane pass occupies residues 68–88 (GPLLITGSCLFSGTIYGLCLL). Over 89 to 96 (PKGHSLRR) the chain is Lumenal. Residues 97–117 (ILGPLTPIGGLVMLTGWATML) form a helical membrane-spanning segment. A topological domain (cytoplasmic) is located at residue Val-118.

This sequence belongs to the UPF0382 family.

The protein resides in the endoplasmic reticulum membrane. This Schizosaccharomyces pombe (strain 972 / ATCC 24843) (Fission yeast) protein is UPF0382 membrane protein C1782.12c.